The chain runs to 144 residues: uncharacterized protein (144 aa).

A helical membrane pass occupies residues 72 to 90 (VAIGTSLIVGAGVAMEVSV).

This sequence to yeast YCL21w.

The protein resides in the membrane. This is an uncharacterized protein from Saccharomyces cerevisiae (strain ATCC 204508 / S288c) (Baker's yeast).